A 936-amino-acid polypeptide reads, in one-letter code: VPS35 endosomal protein-sorting factor-like (936 aa).

2 disordered regions span residues 43 to 69 (SKTKKVSRKGSTSSTSSSSSSSVVDPL) and 87 to 113 (DPAATVTVTESSRKKRDKDDNSFVGPD). Residues 51-69 (KGSTSSTSSSSSSSVVDPL) show a composition bias toward low complexity. Ser-265 bears the Phosphoserine mark. The helical transmembrane segment at 672–692 (AFVRACVAYCFITIPSLVGIF) threads the bilayer.

Belongs to the VPS35L family. Component of the heterotrimeric retriever complex formed by VPS26C, VPS29 and VPS35L. Interacts with VPS29. Interacts with COMMD1, CCDC93 and CCDC22; associates with the CCC (COMMD/CCDC22/CCDC93) complex which contains at least COMMD1 (and possibly other COMM domain-containing proteins), CCDC22 and CCDC93. Interacts with WASHC1, WASHC2A and WASHC2C. Interacts with SNX17 and SNX31.

It is found in the membrane. It localises to the endosome. In terms of biological role, acts as a component of the retriever complex. The retriever complex is a heterotrimeric complex related to retromer cargo-selective complex (CSC) and essential for retromer-independent retrieval and recycling of numerous cargos such as integrin alpha-5/beta-1 (ITGA5:ITGB1). The recruitment of the retriever complex to the endosomal membrane involves CCC and WASH complexes. In the endosomes, drives the retrieval and recycling of NxxY-motif-containing cargo proteins by coupling to SNX17, a cargo essential for the homeostatic maintenance of numerous cell surface proteins associated with processes that include cell migration, cell adhesion, nutrient supply and cell signaling. Involved in copper-dependent ATP7A trafficking between the trans-Golgi network and vesicles in the cell periphery; the function is proposed to depend on its association with the CCC complex and cooperation with the WASH complex on early endosomes. Seems not to be required for CCC complex stability. The protein is VPS35 endosomal protein-sorting factor-like of Rattus norvegicus (Rat).